Consider the following 849-residue polypeptide: DNA mismatch repair protein MutS (849 aa).

602–609 provides a ligand contact to ATP; it reads GPNMSGKS.

Belongs to the DNA mismatch repair MutS family.

This protein is involved in the repair of mismatches in DNA. It is possible that it carries out the mismatch recognition step. This protein has a weak ATPase activity. This is DNA mismatch repair protein MutS from Streptococcus sanguinis (strain SK36).